We begin with the raw amino-acid sequence, 166 residues long: SUMO-conjugating enzyme UBC9 (166 aa).

Positions 4 to 157 (IAAGRLAEER…VKKEAVKYAA (154 aa)) constitute a UBC core domain. Cysteine 93 acts as the Glycyl thioester intermediate in catalysis.

It belongs to the ubiquitin-conjugating enzyme family. In terms of assembly, interacts with brd-1 and rad-51. Interacts with smo-1 and sop-2. Interacts with bet-1 (via BROMO domain 2). Interacts with isoforms 1 and 2 of X-box-binding protein xbp-1.

Its subcellular location is the nucleus envelope. Its pathway is protein modification; protein sumoylation. In terms of biological role, accepts the ubiquitin-like protein smo-1 from the aos-1-uba-2 E1 complex and catalyzes its covalent attachment to other proteins with the help of an E3 ligase such as gei-17. Required to sumoylate the ETS transcription factor lin-1, Polycomb protein sop-2, and intermediate filament proteins, such as ifb-1. Required for embryonic development, fertility, vulval morphogenesis, inhibition of vulval cell fates, lifespan, and neuromuscular activity. The protein is SUMO-conjugating enzyme UBC9 of Caenorhabditis elegans.